Reading from the N-terminus, the 1350-residue chain is Protein transport protein SEC16A homolog (1350 aa).

Disordered stretches follow at residues 26–45 (YTPTASSSAKELKFDDGSDS), 73–97 (LGNDVANEGTSGSVGKEEPSSSIAP), 964–1063 (MPPP…TRKV), 1118–1216 (AEEA…KPPI), and 1235–1350 (QVME…EVEL). The segment covering 35–45 (KELKFDDGSDS) has biased composition (basic and acidic residues). Serine 43 is subject to Phosphoserine. Residues 970–1002 (HSTTGNPQVNEYQHQQQEAAKLSYSQSANTMSS) show a composition bias toward polar residues. A compositionally biased stretch (low complexity) spans 1150-1168 (SPSSGSWSSGSPTPSENSP). Polar residues-rich tracts occupy residues 1195–1210 (TYNQGSSSMYQSPPVQ) and 1289–1316 (RSGSGTSLNGDLPQSVSRRTASWSGSVN). A compositionally biased stretch (low complexity) spans 1317-1343 (SSSFMSPTSASTFRPSPLNSSSSSLGE).

Belongs to the SEC16 family. As to quaternary structure, interacts with SEC13A, SEC13B and SEC31A.

The protein resides in the golgi apparatus. Its subcellular location is the golgi stack. It is found in the endoplasmic reticulum. Functionally, required for efficient protein export from the endoplasmic reticulum (ER) to the Golgi by regulating COPII coat dynamics at the ER. Functions as a scaffold and regulator of COPII coat assembly at ER exit sites. The sequence is that of Protein transport protein SEC16A homolog from Arabidopsis thaliana (Mouse-ear cress).